The primary structure comprises 803 residues: Protein translocase subunit SecA (803 aa).

Residues Gln-100, 118 to 122, and Asp-508 contribute to the ATP site; that span reads GEGKT.

This sequence belongs to the SecA family. As to quaternary structure, monomer and homodimer. Part of the essential Sec protein translocation apparatus which comprises SecA, SecYEG and auxiliary proteins SecDF. Other proteins may also be involved.

Its subcellular location is the cell membrane. It localises to the cytoplasm. It carries out the reaction ATP + H2O + cellular proteinSide 1 = ADP + phosphate + cellular proteinSide 2.. Its function is as follows. Part of the Sec protein translocase complex. Interacts with the SecYEG preprotein conducting channel. Has a central role in coupling the hydrolysis of ATP to the transfer of proteins into and across the cell membrane, serving as an ATP-driven molecular motor driving the stepwise translocation of polypeptide chains across the membrane. The polypeptide is Protein translocase subunit SecA (Leuconostoc mesenteroides subsp. mesenteroides (strain ATCC 8293 / DSM 20343 / BCRC 11652 / CCM 1803 / JCM 6124 / NCDO 523 / NBRC 100496 / NCIMB 8023 / NCTC 12954 / NRRL B-1118 / 37Y)).